Here is a 710-residue protein sequence, read N- to C-terminus: Tubulin polyglutamylase TTLL11 (710 aa).

The tract at residues 41–135 (VRVDAGAAGE…QRPVTVDSSK (95 aa)) is disordered. Basic and acidic residues predominate over residues 51-60 (PECKAGEEQP). Residues 64-82 (APAPAQPSAAEEGNTQVLQ) are compositionally biased toward low complexity. Residues 83 to 93 (RPPPTLPPSKP) show a composition bias toward pro residues. The span at 123 to 135 (NGSQRPVTVDSSK) shows a compositional bias: polar residues. The TTL domain occupies 128–480 (PVTVDSSKAR…EVKVAVIRDT (353 aa)). Residues Lys249, 255 to 256 (QG), 282 to 285 (QEYI), and 295 to 297 (KFD) contribute to the ATP site. Gln255 is a binding site for a protein. Position 321 (Arg321) interacts with L-glutamate. 343-344 (TN) serves as a coordination point for ATP. L-glutamate contacts are provided by Tyr345, Ser346, and Lys365. Mg(2+) is bound by residues Asp428, Glu441, and Asn443. The c-MTBD region stretch occupies residues 467-538 (LVDEEVKVAV…SICLKQVFPK (72 aa)). Lys473 lines the L-glutamate pocket. The interval 665 to 710 (GVPSGGRPPHRGPPQEPSPSAQPAGDNPPPRTSCANKLSHPRHTLS) is disordered.

It belongs to the tubulin--tyrosine ligase family. It depends on Mg(2+) as a cofactor.

Its subcellular location is the cytoplasm. It localises to the cytoskeleton. The protein localises to the cilium basal body. The enzyme catalyses L-glutamyl-[protein] + L-glutamate + ATP = gamma-L-glutamyl-L-glutamyl-[protein] + ADP + phosphate + H(+). It catalyses the reaction (L-glutamyl)(n)-gamma-L-glutamyl-L-glutamyl-[protein] + L-glutamate + ATP = (L-glutamyl)(n+1)-gamma-L-glutamyl-L-glutamyl-[protein] + ADP + phosphate + H(+). Polyglutamylase which modifies tubulin, generating polyglutamate side chains of variable lengths on the gamma-carboxyl group of specific glutamate residues within the C-terminal tail of tubulin. Preferentially mediates ATP-dependent polyglutamate long side-chain elongation over the initiation step of the polyglutamylation reaction. Preferentially modifies the alpha-tubulin tail over a beta-tail. Required for CCSAP localization to both spindle and cilia microtubules. Promotes tubulin polyglutamylation which stimulates spastin/SPAST-mediated microtubule severing, thereby regulating microtubule functions. In Homo sapiens (Human), this protein is Tubulin polyglutamylase TTLL11.